The sequence spans 540 residues: Phosphoenolpyruvate carboxykinase (ATP) (540 aa).

Substrate is bound at residue arginine 65. Lysine 87 carries the post-translational modification N6-acetyllysine. The substrate site is built by tyrosine 207 and lysine 213. ATP-binding positions include lysine 213, histidine 232, and 248–256; that span reads GLSGTGKTT. Residues lysine 213 and histidine 232 each contribute to the Mn(2+) site. Aspartate 269 lines the Mn(2+) pocket. Residues glutamate 297, arginine 333, 449–450, and threonine 455 each bind ATP; that span reads RI. Arginine 333 lines the substrate pocket. At lysine 523 the chain carries N6-acetyllysine.

This sequence belongs to the phosphoenolpyruvate carboxykinase (ATP) family. In terms of assembly, monomer. It depends on Mn(2+) as a cofactor.

The protein resides in the cytoplasm. It catalyses the reaction oxaloacetate + ATP = phosphoenolpyruvate + ADP + CO2. The protein operates within carbohydrate biosynthesis; gluconeogenesis. Functionally, involved in the gluconeogenesis. Catalyzes the conversion of oxaloacetate (OAA) to phosphoenolpyruvate (PEP) through direct phosphoryl transfer between the nucleoside triphosphate and OAA. This chain is Phosphoenolpyruvate carboxykinase (ATP), found in Escherichia coli O157:H7.